The following is a 155-amino-acid chain: Ribonuclease H (155 aa).

Residues 1-142 (MLKQVEIFTD…CDVLARDAAS (142 aa)) form the RNase H type-1 domain. Mg(2+) contacts are provided by Asp-10, Glu-48, Asp-70, and Asp-134.

The protein belongs to the RNase H family. As to quaternary structure, monomer. It depends on Mg(2+) as a cofactor.

It is found in the cytoplasm. It carries out the reaction Endonucleolytic cleavage to 5'-phosphomonoester.. Functionally, endonuclease that specifically degrades the RNA of RNA-DNA hybrids. This chain is Ribonuclease H, found in Serratia proteamaculans (strain 568).